A 429-amino-acid chain; its full sequence is 3-oxo-tetronate kinase (429 aa).

ATP-binding positions include Ser-268, 366 to 369 (GGET), and Gly-410.

It belongs to the four-carbon acid sugar kinase family.

It carries out the reaction 3-dehydro-L-erythronate + ATP = 3-dehydro-4-O-phospho-L-erythronate + ADP + H(+). The catalysed reaction is 3-dehydro-D-erythronate + ATP = 3-dehydro-4-O-phospho-D-erythronate + ADP + H(+). Its function is as follows. Catalyzes the ATP-dependent phosphorylation of 3-oxo-tetronate to 3-oxo-tetronate 4-phosphate. In Pseudomonas savastanoi pv. phaseolicola (strain 1448A / Race 6) (Pseudomonas syringae pv. phaseolicola (strain 1448A / Race 6)), this protein is 3-oxo-tetronate kinase.